Consider the following 214-residue polypeptide: Ribonuclease HII (214 aa).

Residues 26–214 (EIVCGVDEAG…PVREAFDLIR (189 aa)) enclose the RNase H type-2 domain. Residues Asp32, Glu33, and Asp124 each coordinate a divalent metal cation.

The protein belongs to the RNase HII family. The cofactor is Mn(2+). Requires Mg(2+) as cofactor.

Its subcellular location is the cytoplasm. The catalysed reaction is Endonucleolytic cleavage to 5'-phosphomonoester.. Functionally, endonuclease that specifically degrades the RNA of RNA-DNA hybrids. The chain is Ribonuclease HII from Burkholderia pseudomallei (strain 668).